The chain runs to 165 residues: DELTA-actitoxin-Oor1a (165 aa).

An N-terminal region region spans residues 1–17 (ATFRVLAKVLAELGKVS). Residues Ser-41, Val-74, Ser-92, Pro-94, and Tyr-125 each contribute to the phosphocholine site. Positions 92–107 (SVPYDYNLYSNWWNVK) are trp-rich region, which is important for the binding to lipid membrane.

This sequence belongs to the actinoporin family. Sea anemone subfamily. As to quaternary structure, octamer or nonamer in membranes. Monomer in the soluble state.

Its subcellular location is the secreted. It is found in the nematocyst. It localises to the target cell membrane. Pore-forming protein that forms cations-selective hydrophilic pores of around 1 nm and causes cardiac stimulation and cytolysis. Pore formation is a multi-step process that involves specific recognition of membrane sphingomyelin (but neither cholesterol nor phosphatidylcholine) using aromatic rich region and adjacent phosphocholine (POC) binding site, firm binding to the membrane (mainly driven by hydrophobic interactions) accompanied by the transfer of the N-terminal region to the lipid-water interface and finally pore formation after oligomerization of monomers. Cytolytic effects include red blood cells hemolysis, platelet aggregation and lysis, cytotoxic and cytostatic effects on fibroblasts. Lethality in mammals has been ascribed to severe vasospasm of coronary vessels, cardiac arrhythmia, and inotropic effects. In Oulactis orientalis (Japan anemone), this protein is DELTA-actitoxin-Oor1a.